The primary structure comprises 471 residues: Tyrosine--tRNA ligase, mitochondrial (471 aa).

Tyr71 provides a ligand contact to L-tyrosine. Residue Asp75 participates in ATP binding. Positions 76 to 85 match the 'HIGH' region motif; it reads PTGDSLHVGH. Positions 115, 215, 219, 222, and 241 each coordinate L-tyrosine. ATP contacts are provided by Ile268 and Lys278. The 'KMSKS' region motif lies at 275 to 279; that stretch reads KLGKS. An N6-acetyllysine mark is found at Lys349 and Lys361.

This sequence belongs to the class-I aminoacyl-tRNA synthetase family. In terms of assembly, homodimer.

Its subcellular location is the mitochondrion matrix. The enzyme catalyses tRNA(Tyr) + L-tyrosine + ATP = L-tyrosyl-tRNA(Tyr) + AMP + diphosphate + H(+). In terms of biological role, catalyzes the attachment of tyrosine to tRNA(Tyr) in a two-step reaction: tyrosine is first activated by ATP to form Tyr-AMP and then transferred to the acceptor end of tRNA(Tyr). The polypeptide is Tyrosine--tRNA ligase, mitochondrial (Yars2) (Rattus norvegicus (Rat)).